The sequence spans 649 residues: 1,4-alpha-glucan branching enzyme GlgB (649 aa).

Catalysis depends on aspartate 315, which acts as the Nucleophile. The active-site Proton donor is the glutamate 366.

The protein belongs to the glycosyl hydrolase 13 family. GlgB subfamily. As to quaternary structure, monomer.

The catalysed reaction is Transfers a segment of a (1-&gt;4)-alpha-D-glucan chain to a primary hydroxy group in a similar glucan chain.. The protein operates within glycan biosynthesis; glycogen biosynthesis. Its function is as follows. Catalyzes the formation of the alpha-1,6-glucosidic linkages in glycogen by scission of a 1,4-alpha-linked oligosaccharide from growing alpha-1,4-glucan chains and the subsequent attachment of the oligosaccharide to the alpha-1,6 position. This is 1,4-alpha-glucan branching enzyme GlgB from Ligilactobacillus salivarius (strain UCC118) (Lactobacillus salivarius).